A 444-amino-acid chain; its full sequence is Exodeoxyribonuclease 7 large subunit (444 aa).

It belongs to the XseA family. Heterooligomer composed of large and small subunits.

Its subcellular location is the cytoplasm. It carries out the reaction Exonucleolytic cleavage in either 5'- to 3'- or 3'- to 5'-direction to yield nucleoside 5'-phosphates.. Functionally, bidirectionally degrades single-stranded DNA into large acid-insoluble oligonucleotides, which are then degraded further into small acid-soluble oligonucleotides. The protein is Exodeoxyribonuclease 7 large subunit of Rickettsia canadensis (strain McKiel).